A 71-amino-acid polypeptide reads, in one-letter code: UPF0346 protein SAK_1533 (71 aa).

This sequence belongs to the UPF0346 family.

This chain is UPF0346 protein SAK_1533, found in Streptococcus agalactiae serotype Ia (strain ATCC 27591 / A909 / CDC SS700).